A 202-amino-acid chain; its full sequence is Matrix protein (202 aa).

Residues 35 to 38 (PPEY) carry the PPXY motif motif. Positions 115–151 (KLRRTFIFQWADSRGPLEGEELEYSQEITWDDDTEFV) are essential for glycoprotein binding.

This sequence belongs to the lyssavirus matrix protein family. Homomultimer. Interacts with nucleoprotein and with the cytoplasmic domain of glycoprotein. Interacts with host ATP6V1A; this interaction plays an important role in virion uncoating after viral entry.

It is found in the virion membrane. The protein localises to the host endomembrane system. It localises to the host cytoplasm. Its function is as follows. Plays a major role in assembly, budding and uncoating of virion after membrane fusion. Completely covers the ribonucleoprotein coil and keep it in condensed bullet-shaped form. Inhibits viral transcription and stimulates replication. Plays a major role in early induction of TRAIL-mediated apoptosis in infected neurons. Inhibits the integrated stress response (ISR) in the infected cell by blocking the formation of stress granules. The protein is Matrix protein (M) of Rabies virus (strain ERA) (RABV).